The following is a 377-amino-acid chain: All-trans-retinol dehydrogenase [NAD(+)] ADH4 (377 aa).

C47 is a Zn(2+) binding site. 48–49 contributes to the NAD(+) binding site; sequence PT. Zn(2+)-binding residues include H68, C98, C101, C104, C112, and C179. NAD(+)-binding positions include 204–209, D228, K233, 297–299, 320–322, and R372; these read GLGCVG, VGA, and TFF.

The protein belongs to the zinc-containing alcohol dehydrogenase family. Class-II subfamily. In terms of assembly, dimer. Zn(2+) is required as a cofactor. Liver specific.

It localises to the cytoplasm. The catalysed reaction is all-trans-retinol + NAD(+) = all-trans-retinal + NADH + H(+). The enzyme catalyses 9-cis-retinol + NAD(+) = 9-cis-retinal + NADH + H(+). It carries out the reaction 20-oxo-(5Z,8Z,11Z,14Z)-eicosatetraenoate + NAD(+) + H2O = (5Z,8Z,11Z,14Z)-eicosatetraenedioate + NADH + 2 H(+). It catalyses the reaction 20-hydroxy-(5Z,8Z,11Z,14Z)-eicosatetraenoate + NAD(+) = 20-oxo-(5Z,8Z,11Z,14Z)-eicosatetraenoate + NADH + H(+). The catalysed reaction is 1,4-benzoquinone + NADH + H(+) = hydroquinone + NAD(+). Its activity is regulated as follows. Oxidation of 20-HETE is inhibited by low concentrations of N-heptylformamide. Oxidation of 20-HETE is a decreased by 55-65% by either all-trans-retinol or all-trans-retinoic acid. Strongly inhibited by omega-hydroxy fatty acids. Functionally, catalyzes the NAD-dependent oxidation of either all-trans-retinol or 9-cis-retinol. Also oxidizes long chain omega-hydroxy fatty acids, such as 20-HETE, producing both the intermediate aldehyde, 20-oxoarachidonate and the end product, a dicarboxylic acid, (5Z,8Z,11Z,14Z)-eicosatetraenedioate. Also catalyzes the reduction of benzoquinones. The polypeptide is All-trans-retinol dehydrogenase [NAD(+)] ADH4 (Rattus norvegicus (Rat)).